The chain runs to 410 residues: MAKDAGLIEANGELKVFIDQNLSPGKGVVSLVAVHPSTVNSLGKQLLPKTFGQSNVNITQQVVIGTPQRPAAPNTIVVGSPHTPNTHFVSQNQPSDPSPWSAGKRNRKGEKNGKGLRHFSMKVCEKVQRKGTTSYNEVADELVAEFSAADSHILPSESAYDQKNIRRRVYDALNVLMAMNIISKEKKEIKWIGLPTNSAQECQSLEVERQRRLERIKQKQSQLQELILQQIAFKNLVQRNRQVEQQASRPPPPNSVIHLPFIIVNTSKKTVIDCSISNDKFEYLFNFDNTFEIHDDIEVLKRMGMACGLESGSCSPEDLRVARSLVPKALEPYVTEMAQGSLGGVFVASAVSTSNGTRLSASDLANGADGALATSSSGSQYSGSRVETPVSCVGEDDEDDEDFNENEEED.

Lys3 is subject to N6-acetyllysine. Residue Ser23 is modified to Phosphoserine; by CDK2. The disordered stretch occupies residues 77–114; sequence VVGSPHTPNTHFVSQNQPSDPSPWSAGKRNRKGEKNGK. The span at 82 to 95 shows a compositional bias: polar residues; that stretch reads HTPNTHFVSQNQPS. Basic residues predominate over residues 104-114; sequence KRNRKGEKNGK. The tract at residues 105-127 is interaction with CEBPA; sequence RNRKGEKNGKGLRHFSMKVCEKV. Residues 113–195 mediate DNA binding; that stretch reads GKGLRHFSMK…KKEIKWIGLP (83 aa). Positions 161–195 match the DEF box motif; that stretch reads DQKNIRRRVYDALNVLMAMNIISKEKKEIKWIGLP. Residues 204–277 form a dimerization region; the sequence is SLEVERQRRL…KKTVIDCSIS (74 aa). Residues 211-327 form an enhances binding of RB protein to E2F region; it reads RRLERIKQKQ…DLRVARSLVP (117 aa). The DCB1 stretch occupies residues 214 to 246; the sequence is ERIKQKQSQLQELILQQIAFKNLVQRNRQVEQQ. The segment at 259–315 is DCB2; it reads LPFIIVNTSKKTVIDCSISNDKFEYLFNFDNTFEIHDDIEVLKRMGMACGLESGSCS. The interval 370-410 is disordered; the sequence is GALATSSSGSQYSGSRVETPVSCVGEDDEDDEDFNENEEED. A compositionally biased stretch (low complexity) spans 375-384; the sequence is SSSGSQYSGS. Acidic residues predominate over residues 394–410; it reads GEDDEDDEDFNENEEED.

This sequence belongs to the E2F/DP family. In terms of assembly, component of the E2F:DP transcription factor complex. Forms heterodimers with E2F family members. The complex can interact with hypophosphorylated retinoblastoma protein RB1 and related proteins (RBL1 and RBL2) that inhibit the E2F transactivation domain. This repression involves recruitment of histone deacetylase (HDAC). During the cell cycle, from mid-to-late G1 phase, RB family members become phosphorylated, detach from the DRTF1/E2F complex to render E2F transcriptionally active. Part of the E2F6.com-1 complex in G0 phase is composed of E2F6, MGA, MAX, TFDP1, CBX3, BAT8, EUHMTASE1, RING1, RNF2, MBLR, L3MBTL2 YAF2. Component of the DREAM complex (also named LINC complex) at least composed of E2F4, E2F5, LIN9, LIN37, LIN52, LIN54, MYBL1, MYBL2, RBL1, RBL2, RBBP4, TFDP1 and TFDP2. The complex exists in quiescent cells where it represses cell cycle-dependent genes. It dissociates in S phase when LIN9, LIN37, LIN52 and LIN54 form a subcomplex that binds to MYBL2. The complex TFDP1:E2F1 interacts with CEBPA; the interaction prevents CEBPA binding to target gene promoters and represses its transcriptional activity. In terms of processing, ubiquitinated by the BCR(KBTBD5) complex, leading to its subsequent degradation. Post-translationally, phosphorylation by E2F1-bound cyclin A-CDK2, in the S phase, inhibits E2F-mediated DNA binding and transactivation.

Its subcellular location is the nucleus. It is found in the cytoplasm. Its function is as follows. Can stimulate E2F-dependent transcription. Binds DNA cooperatively with E2F family members through the E2 recognition site, 5'-TTTC[CG]CGC-3', found in the promoter region of a number of genes whose products are involved in cell cycle regulation or in DNA replication. The E2F1:DP complex appears to mediate both cell proliferation and apoptosis. Blocks adipocyte differentiation by repressing CEBPA binding to its target gene promoters. The protein is Transcription factor Dp-1 (TFDP1) of Bos taurus (Bovine).